Consider the following 129-residue polypeptide: Fluoride-specific ion channel FluC 2 (129 aa).

The next 4 helical transmembrane spans lie at 3-23, 32-52, 59-79, and 90-110; these read FLYV…MNLW, ATLA…PFLA, LVLL…FSAF, and GEVV…LVMV. The Na(+) site is built by Gly-71 and Thr-74.

The protein belongs to the fluoride channel Fluc/FEX (TC 1.A.43) family.

The protein resides in the cell membrane. It catalyses the reaction fluoride(in) = fluoride(out). Its activity is regulated as follows. Na(+) is not transported, but it plays an essential structural role and its presence is essential for fluoride channel function. In terms of biological role, fluoride-specific ion channel. Important for reducing fluoride concentration in the cell, thus reducing its toxicity. This is Fluoride-specific ion channel FluC 2 from Listeria innocua serovar 6a (strain ATCC BAA-680 / CLIP 11262).